The chain runs to 128 residues: Cytochrome c-type biogenesis protein CcmE (128 aa).

The Cytoplasmic portion of the chain corresponds to 1–8 (MQKRVRNR). Residues 9–29 (LITIIICFCSACLGISIILYN) traverse the membrane as a helical; Signal-anchor for type II membrane protein segment. The Extracellular portion of the chain corresponds to 30 to 128 (LEKNIVFFLP…KHDENYRPPQ (99 aa)). 2 residues coordinate heme: His-120 and Tyr-124.

Belongs to the CcmE/CycJ family.

The protein resides in the cell membrane. In terms of biological role, heme chaperone required for the biogenesis of c-type cytochromes. Transiently binds heme delivered by CcmC and transfers the heme to apo-cytochromes in a process facilitated by CcmF and CcmH. The polypeptide is Cytochrome c-type biogenesis protein CcmE (Rickettsia africae (strain ESF-5)).